The primary structure comprises 902 residues: Auxin response factor 5 (902 aa).

A DNA-binding region (TF-B3) is located at residues 158-260 (FCKTLTASDT…QLMVGVRRAN (103 aa)). A disordered region spans residues 497 to 543 (SEMVQPQNKLTVNPSASNTSGQEQNLSQSMSAPAKPENSTLSGCSSG). The PB1 domain occupies 793 to 877 (RTYTKVQKTG…RCIRILSPTE (85 aa)).

The protein belongs to the ARF family. In terms of assembly, homodimers and heterodimers. Interacts with BRX and the auxin-responsive proteins IAA1, IAA12 (BODENLOS), IAA17 and ARF7. In terms of tissue distribution, expressed in the whole plant with a lower expression in leaves. Detected in embryo axis, provascular tissues, procambium and some differentiated vascular regions of mature organs.

The protein localises to the nucleus. Functionally, auxin response factors (ARFs) are transcriptional factors that bind specifically to the DNA sequence 5'-TGTCTC-3' found in the auxin-responsive promoter elements (AuxREs). Seems to act as transcriptional activator. Formation of heterodimers with Aux/IAA proteins may alter their ability to modulate early auxin response genes expression. Mediates embryo axis formation and vascular tissues differentiation. Functionally redundant with ARF7. May be necessary to counteract AMP1 activity. This is Auxin response factor 5 (ARF5) from Arabidopsis thaliana (Mouse-ear cress).